We begin with the raw amino-acid sequence, 800 residues long: DNA topoisomerase 4 subunit A (800 aa).

The region spanning 31–495 (LPDVRDGLKP…EIEEIKIDKE (465 aa)) is the Topo IIA-type catalytic domain. The O-(5'-phospho-DNA)-tyrosine intermediate role is filled by Tyr-119.

It belongs to the type II topoisomerase GyrA/ParC subunit family. ParC type 2 subfamily. Heterotetramer composed of ParC and ParE.

The protein resides in the cell membrane. It carries out the reaction ATP-dependent breakage, passage and rejoining of double-stranded DNA.. Its function is as follows. Topoisomerase IV is essential for chromosome segregation. It relaxes supercoiled DNA. Performs the decatenation events required during the replication of a circular DNA molecule. In Staphylococcus aureus (strain MRSA252), this protein is DNA topoisomerase 4 subunit A.